Consider the following 197-residue polypeptide: Phosphoheptose isomerase (197 aa).

Residues 37-197 form the SIS domain; sequence MLQCLMNDGK…CIDSVLLEGM (161 aa). Position 52 to 54 (52 to 54) interacts with substrate; sequence NGG. Zn(2+) contacts are provided by His-61 and Glu-65. Substrate contacts are provided by residues Glu-65, 94–95, 120–122, Ser-125, and Gln-175; these read ND and STS. Residues Gln-175 and His-183 each coordinate Zn(2+).

This sequence belongs to the SIS family. GmhA subfamily. In terms of assembly, homotetramer. Zn(2+) serves as cofactor.

The protein localises to the cytoplasm. It carries out the reaction 2 D-sedoheptulose 7-phosphate = D-glycero-alpha-D-manno-heptose 7-phosphate + D-glycero-beta-D-manno-heptose 7-phosphate. The protein operates within carbohydrate biosynthesis; D-glycero-D-manno-heptose 7-phosphate biosynthesis; D-glycero-alpha-D-manno-heptose 7-phosphate and D-glycero-beta-D-manno-heptose 7-phosphate from sedoheptulose 7-phosphate: step 1/1. Catalyzes the isomerization of sedoheptulose 7-phosphate in D-glycero-D-manno-heptose 7-phosphate. In Neisseria gonorrhoeae (strain ATCC 700825 / FA 1090), this protein is Phosphoheptose isomerase.